Reading from the N-terminus, the 251-residue chain is NADPH-dependent oxidoreductase (251 aa).

This sequence belongs to the flavin oxidoreductase frp family. Requires FMN as cofactor.

In terms of biological role, reduces FMN, organic nitro compounds and disulfide DTNB. Involved in maintenance of the cellular redox state and the disulfide stress response. The protein is NADPH-dependent oxidoreductase (nfrA) of Staphylococcus aureus (strain bovine RF122 / ET3-1).